The following is a 908-amino-acid chain: Probable RNA-directed DNA polymerase from transposon X-element (908 aa).

The region spanning 481 to 752 (AIVRLQYFPY…NAAKYLGVLL (272 aa)) is the Reverse transcriptase domain. Residues 883-908 (RPPRRLNRRQPRDLITRSPLTRVRRS) form a disordered region.

Requires Mg(2+) as cofactor. Mn(2+) is required as a cofactor.

It carries out the reaction DNA(n) + a 2'-deoxyribonucleoside 5'-triphosphate = DNA(n+1) + diphosphate. In Drosophila melanogaster (Fruit fly), this protein is Probable RNA-directed DNA polymerase from transposon X-element (X-element\ORF2).